Here is a 414-residue protein sequence, read N- to C-terminus: Esterase FrsA (414 aa).

The protein belongs to the FrsA family.

The enzyme catalyses a carboxylic ester + H2O = an alcohol + a carboxylate + H(+). In terms of biological role, catalyzes the hydrolysis of esters. The chain is Esterase FrsA from Escherichia fergusonii (strain ATCC 35469 / DSM 13698 / CCUG 18766 / IAM 14443 / JCM 21226 / LMG 7866 / NBRC 102419 / NCTC 12128 / CDC 0568-73).